Reading from the N-terminus, the 353-residue chain is ATPase GET3 (353 aa).

Position 26-33 (26-33 (KGGVGKTT)) interacts with ATP. Aspartate 57 is a catalytic residue. Positions 244 and 271 each coordinate ATP. 2 residues coordinate Zn(2+): cysteine 284 and cysteine 287.

Belongs to the arsA ATPase family. In terms of assembly, homodimer. Component of the Golgi to ER traffic (GET) complex, which is composed of GET1, GET2 and GET3. Within the complex, GET1 and GET2 form a heterotetramer which is stabilized by phosphatidylinositol binding and which binds to the GET3 homodimer. Interacts with the chloride channel protein GEF1.

The protein localises to the cytoplasm. The protein resides in the endoplasmic reticulum. It is found in the golgi apparatus. ATPase required for the post-translational delivery of tail-anchored (TA) proteins to the endoplasmic reticulum. Recognizes and selectively binds the transmembrane domain of TA proteins in the cytosol. This complex then targets to the endoplasmic reticulum by membrane-bound receptors GET1 and GET2, where the tail-anchored protein is released for insertion. This process is regulated by ATP binding and hydrolysis. ATP binding drives the homodimer towards the closed dimer state, facilitating recognition of newly synthesized TA membrane proteins. ATP hydrolysis is required for insertion. Subsequently, the homodimer reverts towards the open dimer state, lowering its affinity for the GET1-GET2 receptor, and returning it to the cytosol to initiate a new round of targeting. Cooperates with the HDEL receptor ERD2 to mediate the ATP-dependent retrieval of resident ER proteins that contain a C-terminal H-D-E-L retention signal from the Golgi to the ER. Involved in low-level resistance to the oxyanions arsenite and arsenate, and in heat tolerance. The polypeptide is ATPase GET3 (Zygosaccharomyces rouxii (strain ATCC 2623 / CBS 732 / NBRC 1130 / NCYC 568 / NRRL Y-229)).